The sequence spans 225 residues: Cytidylate kinase (225 aa).

Gly-12 to Thr-20 is a binding site for ATP.

It belongs to the cytidylate kinase family. Type 1 subfamily.

Its subcellular location is the cytoplasm. It carries out the reaction CMP + ATP = CDP + ADP. It catalyses the reaction dCMP + ATP = dCDP + ADP. In Proteus mirabilis (strain HI4320), this protein is Cytidylate kinase.